We begin with the raw amino-acid sequence, 199 residues long: Transgelin-2 (199 aa).

N-acetylalanine is present on Ala-2. Ser-11 carries the phosphoserine modification. N6-acetyllysine occurs at positions 17 and 20. The Calponin-homology (CH) domain occupies 24-136; that stretch reads PDLEQILIQW…RTLMNLGGLA (113 aa). At Ser-163 the chain carries Phosphoserine. Lys-171 is covalently cross-linked (Glycyl lysine isopeptide (Lys-Gly) (interchain with G-Cter in SUMO2)). The Calponin-like repeat unit spans residues 174–199; it reads IGLQMGTNRGASQAGMTGYGMPRQIL. A Phosphothreonine modification is found at Thr-180. 2 positions are modified to omega-N-methylarginine: Arg-182 and Arg-196.

The protein belongs to the calponin family.

In Rattus norvegicus (Rat), this protein is Transgelin-2 (Tagln2).